The primary structure comprises 391 residues: Alkanesulfonate monooxygenase (391 aa).

Belongs to the SsuD family.

The catalysed reaction is an alkanesulfonate + FMNH2 + O2 = an aldehyde + FMN + sulfite + H2O + 2 H(+). In terms of biological role, catalyzes the desulfonation of aliphatic sulfonates. The protein is Alkanesulfonate monooxygenase of Methylorubrum extorquens (strain CM4 / NCIMB 13688) (Methylobacterium extorquens).